Reading from the N-terminus, the 420-residue chain is Ammonia monooxygenase beta subunit (420 aa).

The signal sequence occupies residues 1-25; the sequence is MGIKNLYKRGVMGLYGVAYAVAALA. Cu cation is bound by residues H38, H142, and H144. The next 2 helical transmembrane spans lie at 193–213 and 240–260; these read GIFW…VFTA and ITWV…RYTE.

In terms of assembly, the soluble ammonia monooxygenase is a nonamer composed of three alpha subunits (AmoA), three beta subunits (AmoB) and three gamma subunits (Cytochrome c1 PetC). Cu(2+) is required as a cofactor.

It localises to the cell membrane. Its subcellular location is the cytoplasm. The catalysed reaction is AH2 + NH4(+) + O2 = hydroxylamine + A + H2O + H(+). With respect to regulation, in vitro, inhibited by acetylene. In terms of biological role, part of the ammonia monooxygenase complex, which catalyzes the oxidation of ammonia to hydroxylamine, the first reaction in the process of ammonia oxidation to nitrite. The polypeptide is Ammonia monooxygenase beta subunit (Nitrosomonas europaea (strain ATCC 19718 / CIP 103999 / KCTC 2705 / NBRC 14298)).